Consider the following 275-residue polypeptide: NH(3)-dependent NAD(+) synthetase (275 aa).

Gly46–Ser53 is a binding site for ATP. Position 52 (Asp52) interacts with Mg(2+). Arg140 provides a ligand contact to deamido-NAD(+). Thr160 lines the ATP pocket. Position 165 (Glu165) interacts with Mg(2+). 2 residues coordinate deamido-NAD(+): Lys173 and Asp180. 2 residues coordinate ATP: Lys189 and Thr211. Residue His260–Lys261 participates in deamido-NAD(+) binding.

Belongs to the NAD synthetase family. Homodimer.

It carries out the reaction deamido-NAD(+) + NH4(+) + ATP = AMP + diphosphate + NAD(+) + H(+). Its pathway is cofactor biosynthesis; NAD(+) biosynthesis; NAD(+) from deamido-NAD(+) (ammonia route): step 1/1. In terms of biological role, catalyzes the ATP-dependent amidation of deamido-NAD to form NAD. Uses ammonia as a nitrogen source. The protein is NH(3)-dependent NAD(+) synthetase of Shigella flexneri serotype 5b (strain 8401).